The chain runs to 392 residues: MNKILAANQTLTSEAVSEGHPDKIADQISDAILDEILKVDKNAKVACEVIITQNLVVIAGEINSPVKKTLDIKEIAKKIIKDIGYTNIDYGLDYKTITVIDAIGNQSQDIINAIKKKGSNALGAGDQGIIFGYACDETKNFLPAPYELANSILKKASNLRKSGAIEWLRPDSKSQVTIEYDKNRRPVKIKNIIVSHQHHPNISQKLIREPIIEEIIKPTIQDKSIIDENTTYCINPSGNFVIGGPTGDTGLTGRKIIADSYGGFARHGGGAYSGKDATKVDRSAAYMARYIAKNMVAAGISKEFELQLAYAIGIENPISIQITSGINDPKYANKILNFIVNNFDLTPNGIIEKLKLKQPIYLKTCTYGQLGKNEFEWEKLDFVKKIQTVLKK.

Position 20 (H20) interacts with ATP. Mg(2+) is bound at residue D22. E48 is a K(+) binding site. L-methionine-binding residues include E61 and Q106. A flexible loop region spans residues Q106 to K116. Residues D171–K173, D248, R254–K255, A271, and K275 each bind ATP. Position 248 (D248) interacts with L-methionine. An L-methionine-binding site is contributed by K279.

It belongs to the AdoMet synthase family. In terms of assembly, homotetramer; dimer of dimers. It depends on Mg(2+) as a cofactor. The cofactor is K(+).

Its subcellular location is the cytoplasm. The enzyme catalyses L-methionine + ATP + H2O = S-adenosyl-L-methionine + phosphate + diphosphate. It participates in amino-acid biosynthesis; S-adenosyl-L-methionine biosynthesis; S-adenosyl-L-methionine from L-methionine: step 1/1. Catalyzes the formation of S-adenosylmethionine (AdoMet) from methionine and ATP. The overall synthetic reaction is composed of two sequential steps, AdoMet formation and the subsequent tripolyphosphate hydrolysis which occurs prior to release of AdoMet from the enzyme. This Borrelia garinii subsp. bavariensis (strain ATCC BAA-2496 / DSM 23469 / PBi) (Borreliella bavariensis) protein is S-adenosylmethionine synthase.